Reading from the N-terminus, the 101-residue chain is Apolipoprotein C-II (101 aa).

The N-terminal stretch at 1 to 22 is a signal peptide; the sequence is MGTRFLLALFLVLLVLGFEVQG. The interval 66–74 is lipid binding; it reads TVDEKLRDM. Positions 78–101 are lipoprotein lipase cofactor; that stretch reads STAAMSTYAGILTDQVLSMLKGEE.

Belongs to the apolipoprotein C2 family. Proapolipoprotein C-II is synthesized as a sialic acid containing glycoprotein which is subsequently desialylated prior to its proteolytic processing. Post-translationally, proapolipoprotein C-II, the major form found in plasma undergoes proteolytic cleavage of its N-terminal hexapeptide to generate apolipoprotein C-II, which occurs as the minor form in plasma.

It localises to the secreted. In terms of biological role, component of chylomicrons, very low-density lipoproteins (VLDL), low-density lipoproteins (LDL), and high-density lipoproteins (HDL) in plasma. Plays an important role in lipoprotein metabolism as an activator of lipoprotein lipase. Both proapolipoprotein C-II and apolipoprotein C-II can activate lipoprotein lipase. This chain is Apolipoprotein C-II (APOC2), found in Aotus nancymaae (Ma's night monkey).